Consider the following 423-residue polypeptide: Type II methyltransferase M.NgoBV (423 aa).

An SAM-dependent MTase C5-type domain is found at 4–423 (IKFIDLFSGM…AVSERLLHTL (420 aa)). The active site involves cysteine 80.

It belongs to the class I-like SAM-binding methyltransferase superfamily. C5-methyltransferase family.

The catalysed reaction is a 2'-deoxycytidine in DNA + S-adenosyl-L-methionine = a 5-methyl-2'-deoxycytidine in DNA + S-adenosyl-L-homocysteine + H(+). Functionally, a methylase, recognizes the double-stranded sequence 5'-GGNNCC-3', methylates C-5 on both strands, and protects the DNA from cleavage by the NgoBV endonuclease. This is Type II methyltransferase M.NgoBV (ngoBVM) from Neisseria gonorrhoeae.